The sequence spans 688 residues: Glycine--tRNA ligase beta subunit (688 aa).

This sequence belongs to the class-II aminoacyl-tRNA synthetase family. Tetramer of two alpha and two beta subunits.

The protein localises to the cytoplasm. It carries out the reaction tRNA(Gly) + glycine + ATP = glycyl-tRNA(Gly) + AMP + diphosphate. The chain is Glycine--tRNA ligase beta subunit from Aliivibrio salmonicida (strain LFI1238) (Vibrio salmonicida (strain LFI1238)).